Here is a 1730-residue protein sequence, read N- to C-terminus: Nebulin-related-anchoring protein (1730 aa).

The region spanning 4–64 (QPCSRCGYGV…HAHNPKNNTF (61 aa)) is the LIM zinc-binding domain. 44 Nebulin repeats span residues 63–97 (TFTSVYHTPLNLNVRTFPEAISGIHDQEDGEQCKS), 156–166 (EYTEDYEQPRG), 175–202 (TPAYQRAKKANQLASQVEYKRGHDERIS), 203–237 (RFSTVVDTPELLRSKAGAQLQSDVRYTEDYEQQRG), 246–273 (TPAYQIAKRANELASDVRYHQQYQKEMR), 298–307 (YPEEYEEHRG), 316–343 (TPAYQNAKKAHELASDIKYRQDFNKMKG), 348–382 (HSLPAQDNLVLKQAQSVNKLVSEVEYKKDLESSRG), 389–417 (ETPQFRNVSKISKFTSDNKYKENYQNHMR), 419–453 (RYEGVGMDRRTLHAMKVGSLASNVAYKADYKHDIV), 487–521 (KYSSVTDTPQIVQAKINAQQLSHVNYRADYEKNKL), 522–556 (NYTLPQDVPQLVKAKTNAKLFSEVKYKEGWEKTKG), 558–592 (GFEMKLDAMSLLAAKASGELASNIKYKEEYEKTKG), 602–626 (LLHSLQIAKMSSEVEYKKGFEESKT), 627–661 (RFHLPMDMVNIRHAKKAQTLASDLDYRKKLHEYTV), 662–692 (LPEDMKTQWAKKAYGLQSELQYKADLAWMKG), 702–724 (NLEQAKKAGQLVSEKNYRQRVDE), 726–760 (KFTSVTDSSQMEHAKKSQELQSGVAYKAGNEQSVH), 761–795 (QYTISKDEPLFLQARANAANLSEKLYKSSWENQKA), 797–831 (GFELRLDSLTFLAAKAKRDLASEVKYKEDYERSRG), 844–869 (QMSHSLQMSKLQSELEYKKGFEDTKS), 870–896 (QCHVSLDMVHLVHARKAQHLATDVGYK), 901–935 (HFTALPTDMKVEWAKKAYGLQSDNQYRADVKWMKG), 945–963 (NVEQAKKAGELISEKKYRQ), 969–1003 (KFTSIKDTPEMVQARISYTQAVDRLYREQGENIKH), 1004–1038 (HYTPTADLPEVLLAKLNAMNISETRYKESWSKLRD), 1040–1074 (GYKLRLDALPFQAAKASGEIISDYKYKEAFEKMKG), 1078–1112 (GSRSLEDDISLAHSVYATSLQSDVNYKKGFEHSKA), 1113–1139 (QFHLPLDMAALVHAKKAQTLASNQDYK), 1144–1178 (QYTSLAEDLRLSCAKKAHKLQSENLYRSDLNFMRG), 1183–1206 (IPGTLEIEGRKKASELISESKYRQ), 1212–1246 (KYTAVTDTPNLLHAKFSNQITNERLYKAAGEDARH), 1247–1281 (EYTMTLGLPEFIRAKTNAANLSDARYKESWRNLRA), 1283–1317 (GYKLTIEALPFQAARASGDIASDFLYRHDFVKERG), 1321–1355 (GPQSVRDDPRIQHCRRMGQLQSELQYRRGATSSQA), 1356–1390 (QFHLPMDMVHLVHAKNAQALASDHDYRTQYHKFTA), 1391–1421 (LPEDLKMAWAKKAHALQSELRYKSDLIGMKG), 1429–1449 (SPQMESAKKAGELISETKYRK), 1455–1481 (KFTTVVDSPDLVHAKNSYMHCNERMYR), 1490–1524 (RYTLIPDHPDFTRARLNALHLSDKVYRNSWEQTRA), 1526–1560 (SYDFRLDAIPFQTARASREIASDFRYKEAFLRDRG), 1564–1598 (GYRSVDDDPRMKHFLNVGRLQSDNEYKKDFAKSRS), 1599–1626 (QFHSSTDQPGLLQAKRSQQLASDVHYRQ), and 1640–1664 (LRHAQKAHQLQSDVKYKSDLNLTRG). At Ser-1081 the chain carries Phosphoserine. The segment at 1595–1620 (KSRSQFHSSTDQPGLLQAKRSQQLAS) is disordered. The span at 1596 to 1606 (SRSQFHSSTDQ) shows a compositional bias: polar residues.

In terms of assembly, interacts with actin, alpha-actinin, KLHL41, TLN1 and VCL. Interacts with CSRP3. In terms of tissue distribution, expressed in cardiac and skeletal muscle.

Its function is as follows. May be involved in anchoring the terminal actin filaments in the myofibril to the membrane and in transmitting tension from the myofibrils to the extracellular matrix. This chain is Nebulin-related-anchoring protein, found in Homo sapiens (Human).